The primary structure comprises 485 residues: Protein DETOXIFICATION 8 (485 aa).

The interval 1–26 (MENGFSLVPKEEEEEEDYSNEKSEDQ) is disordered. The next 12 helical transmembrane spans lie at 41-61 (FMAA…VISI), 74-94 (AVAI…FGLA), 118-138 (YGSM…WVFM), 159-179 (SIWL…TRFF), 188-208 (LFLS…LLVY), 212-232 (FGIV…VGLL), 263-283 (LAIP…LLIL), 297-317 (VLSI…AIGA), 338-358 (AANS…ISLY), 381-401 (ITPF…LSGV), 414-434 (ANIG…CFVV), and 442-462 (WIGI…VTFF).

This sequence belongs to the multi antimicrobial extrusion (MATE) (TC 2.A.66.1) family.

It is found in the membrane. This is Protein DETOXIFICATION 8 from Arabidopsis thaliana (Mouse-ear cress).